An 80-amino-acid polypeptide reads, in one-letter code: U19-lycotoxin-Ls1a (80 aa).

An N-terminal signal peptide occupies residues 1-22 (MSPKVQALIFIVGLITLLAAHA). Residues 23–34 (QEELSDNTESER) constitute a propeptide that is removed on maturation. Cystine bridges form between Cys36–Cys50, Cys43–Cys55, Cys49–Cys66, and Cys57–Cys64.

The protein belongs to the neurotoxin 02 (plectoxin) family. 05 (U19-lycotoxin) subfamily. As to expression, expressed by the venom gland.

It is found in the secreted. The sequence is that of U19-lycotoxin-Ls1a from Lycosa singoriensis (Wolf spider).